A 444-amino-acid chain; its full sequence is Methylenetetrahydrofolate--tRNA-(uracil-5-)-methyltransferase TrmFO (444 aa).

An FAD-binding site is contributed by glycine 10–glycine 15.

This sequence belongs to the MnmG family. TrmFO subfamily. The cofactor is FAD.

The protein localises to the cytoplasm. It carries out the reaction uridine(54) in tRNA + (6R)-5,10-methylene-5,6,7,8-tetrahydrofolate + NADH + H(+) = 5-methyluridine(54) in tRNA + (6S)-5,6,7,8-tetrahydrofolate + NAD(+). The enzyme catalyses uridine(54) in tRNA + (6R)-5,10-methylene-5,6,7,8-tetrahydrofolate + NADPH + H(+) = 5-methyluridine(54) in tRNA + (6S)-5,6,7,8-tetrahydrofolate + NADP(+). In terms of biological role, catalyzes the folate-dependent formation of 5-methyl-uridine at position 54 (M-5-U54) in all tRNAs. The chain is Methylenetetrahydrofolate--tRNA-(uracil-5-)-methyltransferase TrmFO from Streptococcus uberis (strain ATCC BAA-854 / 0140J).